A 349-amino-acid polypeptide reads, in one-letter code: N-acetyl-gamma-glutamyl-phosphate reductase (349 aa).

Residue Cys149 is part of the active site.

Belongs to the NAGSA dehydrogenase family. Type 1 subfamily.

The protein resides in the cytoplasm. The enzyme catalyses N-acetyl-L-glutamate 5-semialdehyde + phosphate + NADP(+) = N-acetyl-L-glutamyl 5-phosphate + NADPH + H(+). The protein operates within amino-acid biosynthesis; L-arginine biosynthesis; N(2)-acetyl-L-ornithine from L-glutamate: step 3/4. In terms of biological role, catalyzes the NADPH-dependent reduction of N-acetyl-5-glutamyl phosphate to yield N-acetyl-L-glutamate 5-semialdehyde. This chain is N-acetyl-gamma-glutamyl-phosphate reductase, found in Acinetobacter baumannii (strain ACICU).